A 188-amino-acid chain; its full sequence is Peptidyl-tRNA hydrolase (188 aa).

Tyr-16 serves as a coordination point for tRNA. His-21 (proton acceptor) is an active-site residue. TRNA contacts are provided by Phe-66, Asn-68, and Asn-114.

Belongs to the PTH family. In terms of assembly, monomer.

It localises to the cytoplasm. The catalysed reaction is an N-acyl-L-alpha-aminoacyl-tRNA + H2O = an N-acyl-L-amino acid + a tRNA + H(+). Hydrolyzes ribosome-free peptidyl-tRNAs (with 1 or more amino acids incorporated), which drop off the ribosome during protein synthesis, or as a result of ribosome stalling. Its function is as follows. Catalyzes the release of premature peptidyl moieties from peptidyl-tRNA molecules trapped in stalled 50S ribosomal subunits, and thus maintains levels of free tRNAs and 50S ribosomes. The sequence is that of Peptidyl-tRNA hydrolase from Citrifermentans bemidjiense (strain ATCC BAA-1014 / DSM 16622 / JCM 12645 / Bem) (Geobacter bemidjiensis).